The sequence spans 249 residues: UPF0524 protein C3orf70 homolog B (249 aa).

Positions 174 to 230 (GPKMGHCSSPSTSEDSGINALGGHFLESCEEESEEEDELSTDGHSSPGSLWDQDECT) are disordered. Residues 201 to 213 (SCEEESEEEDELS) are compositionally biased toward acidic residues.

It belongs to the UPF0524 family.

Its function is as follows. Plays a role in neuronal and neurobehavioral development. Required for normal expression of the postmitotic and mature neuron markers elavl3 and eno2 and neurobehaviors related to circadian rhythm and altered light-dark conditions. The protein is UPF0524 protein C3orf70 homolog B of Danio rerio (Zebrafish).